Consider the following 419-residue polypeptide: MSGYPGYNNGGYGAPNQQYPPQPYYPPQPAYGAPPPQGGGYGYHQPPPPQQPYGYSQPPPQQYGGYNGVPPNAPQYGRPGMPSVNSNAYTNGNQNAPPPPPQGMHAFGQGAPQGYAFQYSNCTGKRKALLIGINYFGQRGQLRGCINDVKNMSSYLHENFGYQRDDMVLLTDDQQNPMSQPTKQNILRAMHWLVKDARPNDSLFFHYSGHGGQTKDLDGDEEDGYDEVIYPVDFRQVGHIVDDEMHRIMVQPLQPGVRLTAIFDSCHSGTALDLPYVYSTQGVLKEPNLAKEAGQGLLGVISSYSQGDMSGVASNLMGFFKKATTGDDAYNKTLATKTSPADVIMWSGSKDDQTSADATIAAQATGAMSWAFITAMKKNPQQSYVQLLNSIRDELATKYTQKPQLSCSHPLNTNLLFVM.

Positions 1–109 (MSGYPGYNNG…PPQGMHAFGQ (109 aa)) are disordered. 2 stretches are compositionally biased toward pro residues: residues 18–37 (QYPPQPYYPPQPAYGAPPPQ) and 45–61 (QPPPPQQPYGYSQPPPQ). Residues 83-95 (SVNSNAYTNGNQN) are compositionally biased toward polar residues. Catalysis depends on residues His210 and Cys266.

Belongs to the peptidase C14B family.

Involved in cell death (apoptosis). The chain is Metacaspase-1 (casA) from Botryotinia fuckeliana (strain B05.10) (Noble rot fungus).